The chain runs to 679 residues: tRNA uridine 5-carboxymethylaminomethyl modification enzyme MnmG (679 aa).

13 to 18 is a binding site for FAD; it reads GGGHAG. Position 280–294 (280–294) interacts with NAD(+); it reads GPRYCPSVEDKINRF.

This sequence belongs to the MnmG family. In terms of assembly, homodimer. Heterotetramer of two MnmE and two MnmG subunits. FAD is required as a cofactor.

The protein localises to the cytoplasm. Its function is as follows. NAD-binding protein involved in the addition of a carboxymethylaminomethyl (cmnm) group at the wobble position (U34) of certain tRNAs, forming tRNA-cmnm(5)s(2)U34. The chain is tRNA uridine 5-carboxymethylaminomethyl modification enzyme MnmG from Albidiferax ferrireducens (strain ATCC BAA-621 / DSM 15236 / T118) (Rhodoferax ferrireducens).